Reading from the N-terminus, the 345-residue chain is GTPase Obg (345 aa).

Residues 1-159 enclose the Obg domain; that stretch reads MHFLDQAKIF…MWVWLRLKLL (159 aa). The segment at 121 to 142 is disordered; the sequence is GDGGRGNASYKTSTNRAPRQHG. The region spanning 160–327 is the OBG-type G domain; it reads ADCGLVGLPN…VLDKIIEILG (168 aa). Residues 166 to 173, 191 to 195, 212 to 215, 279 to 282, and 308 to 310 each bind GTP; these read GLPNAGKS, FTTIR, DIPG, NKID, and SGA. Serine 173 and threonine 193 together coordinate Mg(2+).

It belongs to the TRAFAC class OBG-HflX-like GTPase superfamily. OBG GTPase family. In terms of assembly, monomer. Mg(2+) is required as a cofactor.

The protein resides in the cytoplasm. Its function is as follows. An essential GTPase which binds GTP, GDP and possibly (p)ppGpp with moderate affinity, with high nucleotide exchange rates and a fairly low GTP hydrolysis rate. Plays a role in control of the cell cycle, stress response, ribosome biogenesis and in those bacteria that undergo differentiation, in morphogenesis control. This Rhizorhabdus wittichii (strain DSM 6014 / CCUG 31198 / JCM 15750 / NBRC 105917 / EY 4224 / RW1) (Sphingomonas wittichii) protein is GTPase Obg.